A 175-amino-acid chain; its full sequence is Disulfide bond formation protein B 2 (175 aa).

Over 1–9 (MYLARTRFL) the chain is Cytoplasmic. The helical transmembrane segment at 10-26 (FFLASLACASIIGVAFY) threads the bilayer. The Periplasmic portion of the chain corresponds to 27–44 (LQQAVGLDPCTLCMVQRA). Cys36 and Cys39 are oxidised to a cystine. Residues 45–61 (AFIACGVLALCAACHAP) traverse the membrane as a helical segment. At 62-68 (GPTGTRR) the chain is on the cytoplasmic side. Residues 69–85 (YSLGLLLVALAGLAGAG) traverse the membrane as a helical segment. Residues 86-142 (TQVWLQTASADQLIPFITRLEQILSLLSLDMCIDRLRSDALFCAEITWTLFGISLPE) lie on the Periplasmic side of the membrane. Residues 143–161 (WSLLAFTGLALLPLYPLFS) traverse the membrane as a helical segment. The Cytoplasmic portion of the chain corresponds to 162-175 (ELSHWLATRDRGGY).

This sequence belongs to the DsbB family.

It localises to the cell inner membrane. Required for disulfide bond formation in some periplasmic proteins. Acts by oxidizing the DsbA protein. This is Disulfide bond formation protein B 2 from Pseudomonas syringae pv. syringae (strain B728a).